Consider the following 262-residue polypeptide: tRNA (guanine-N(1)-)-methyltransferase (262 aa).

S-adenosyl-L-methionine-binding positions include Gly-111 and 130–135; that span reads LGDFVL.

It belongs to the RNA methyltransferase TrmD family. In terms of assembly, homodimer.

It localises to the cytoplasm. It catalyses the reaction guanosine(37) in tRNA + S-adenosyl-L-methionine = N(1)-methylguanosine(37) in tRNA + S-adenosyl-L-homocysteine + H(+). Specifically methylates guanosine-37 in various tRNAs. The protein is tRNA (guanine-N(1)-)-methyltransferase of Desulfitobacterium hafniense (strain Y51).